An 87-amino-acid chain; its full sequence is Small ribosomal subunit protein eS21 (87 aa).

The protein belongs to the eukaryotic ribosomal protein eS21 family. In terms of assembly, component of the small ribosomal subunit. Mature ribosomes consist of a small (40S) and a large (60S) subunit. The 40S subunit contains about 33 different proteins and 1 molecule of RNA (18S). The 60S subunit contains about 49 different proteins and 3 molecules of RNA (25S, 5.8S and 5S).

The protein localises to the cytoplasm. Its function is as follows. Required for the processing of the 20S rRNA-precursor to mature 18S rRNA in a late step of the maturation of 40S ribosomal subunits. Has a physiological role leading to 18S rRNA stability. The chain is Small ribosomal subunit protein eS21 (RPS21) from Candida albicans (Yeast).